The chain runs to 690 residues: MFCRKFKDLKITGECPFSLLAPGQVPTEPIEEVAGVSESCQATLPTCQEFAENAEGSHPQRKTSRNRVYLHTLAESIGKLIFPEFERLNLALQRTLAKHKIKENRNSSEKEDLERIIAEEAIAAGVPVEVLKDSLGEELFKICYEEDEHILGVVGGTLKDFLNSFSTLLKQSSHCQEAERRGRLEDASILCLDKDQDFLNVYYFFPKRTTALLLPGIIKAAARILYESHVEVSLMPPCFRSECTEFVNQPYLLYSVHVKSTKPSLSPGKPQSSLVIPTSLFCKTFPFHFMLDRDLAILQLGNGIRRLVNKRDFQGKPNFEEFFEILTPKINQTFSGIMTMLNMQFVIRVRRWDNLVKKSSRVMDLKGQMIYIVESSAILFLGSPCVDRLEDFTGRGLYLSDIPIHNALRDVVLIGEQARAQDGLKKRLGKLKATLEHAHQALEEEKKKTVDLLCSIFPSEVAQQLWQGQIVQAKKFNEVTMLFSDIVGFTAICSQCSPLQVITMLNALYTRFDQQCGELDVYKVETIGDAYCVAGGLHRESDTHAVQIALMALKMMELSNEVMSPHGEPIKMRIGLHSGSVFAGVVGVKMPRYCLFGNNVTLANKFESCSVPRKINVSPTTYRLLKDCPGFVFTPRSREELPPNFPSDIPGICHFLDAYQHQGPNSKPWFQQKDAEDGNANFLGKASGVD.

Ser-266 is subject to Phosphoserine. One can recognise a Guanylate cyclase domain in the interval 480 to 607 (TMLFSDIVGF…NNVTLANKFE (128 aa)).

This sequence belongs to the adenylyl cyclase class-4/guanylyl cyclase family. The active enzyme is formed by a heterodimer of an alpha and a beta subunit. Heterodimer with GUCY1B1. Requires Mg(2+) as cofactor. It depends on Mn(2+) as a cofactor.

It localises to the cytoplasm. The catalysed reaction is GTP = 3',5'-cyclic GMP + diphosphate. Its activity is regulated as follows. Activated by nitric oxide in the presence of magnesium or manganese ions. The polypeptide is Guanylate cyclase soluble subunit alpha-1 (Gucy1a1) (Rattus norvegicus (Rat)).